The chain runs to 495 residues: Carbohydrate oxidase (495 aa).

A signal peptide spans 1–22 (MRSAFILALGLITASADALVTR). One can recognise an FAD-binding PCMH-type domain in the interval 55–229 (LPYIPTAIAQ…AVWKLATFPA (175 aa)). A cross-link (6-(S-cysteinyl)-8alpha-(pros-histidyl)-FAD (His-Cys)) is located at residues 92–154 (HSYASFGFGG…YGRAISHGTC (63 aa)). Residues N244 and N417 are each glycosylated (N-linked (GlcNAc...) asparagine).

Belongs to the oxygen-dependent FAD-linked oxidoreductase family. FAD serves as cofactor. Post-translationally, the FAD cofactor is bound via a bicovalent 6-S-cysteinyl, 8alpha-N1-histidyl FAD linkage.

The protein localises to the secreted. It carries out the reaction beta-D-glucose + O2 = D-glucono-1,5-lactone + H2O2. The enzyme catalyses D-galactose + O2 = D-galactono-1,5-lactone + H2O2. It catalyses the reaction D-cellobiose + O2 = D-cellobiono-1,5-lactone + H2O2. The catalysed reaction is beta-lactose + O2 = lactobiono-1,5-lactone + H2O2. It carries out the reaction D-maltose + O2 = D-maltobiono-1,5-lactone + H2O2. The enzyme catalyses D-xylose + O2 = D-xylono-1,5-lactone + H2O2. Functionally, catalyzes the selective oxidation of C1 hydroxyl moieties on mono-, oligo- and polysaccharides with concomitant reduction of molecular oxygen to hydrogen peroxide. This results in the formation of the corresponding lactones, which typically undergo spontaneous hydrolysis. Carbohydrate oxidase is able to oxidize a variety of substrates including D-glucose, D-galactose, D-xylose, D-maltose, D-cellobiose, and lactose. In addition, among various oligosaccharides, the enzyme preferred tetrameric dextrins, indicating a favorable interaction of four linked glucose units with the substrate binding pocket. The polypeptide is Carbohydrate oxidase (Microdochium nivale (Pink snow mold)).